Reading from the N-terminus, the 134-residue chain is Large-conductance mechanosensitive channel (134 aa).

2 helical membrane-spanning segments follow: residues 15-35 (IDLA…QSVV) and 80-100 (GNFI…FLAV).

The protein belongs to the MscL family. In terms of assembly, homopentamer.

It localises to the cell inner membrane. In terms of biological role, channel that opens in response to stretch forces in the membrane lipid bilayer. May participate in the regulation of osmotic pressure changes within the cell. This is Large-conductance mechanosensitive channel from Methylocella silvestris (strain DSM 15510 / CIP 108128 / LMG 27833 / NCIMB 13906 / BL2).